Consider the following 97-residue polypeptide: Putative CC-type chemokine U83 (97 aa).

Intrachain disulfides connect cysteine 32–cysteine 62 and cysteine 33–cysteine 76.

Belongs to the intercrine beta (chemokine CC) family. Highly divergent.

This chain is Putative CC-type chemokine U83 (U83), found in Homo sapiens (Human).